The sequence spans 156 residues: Small ribosomal subunit protein uS7 (156 aa).

Belongs to the universal ribosomal protein uS7 family. Part of the 30S ribosomal subunit. Contacts proteins S9 and S11.

Functionally, one of the primary rRNA binding proteins, it binds directly to 16S rRNA where it nucleates assembly of the head domain of the 30S subunit. Is located at the subunit interface close to the decoding center, probably blocks exit of the E-site tRNA. This Gloeobacter violaceus (strain ATCC 29082 / PCC 7421) protein is Small ribosomal subunit protein uS7.